The sequence spans 1372 residues: DNA-directed RNA polymerase subunit beta (1372 aa).

This sequence belongs to the RNA polymerase beta chain family. The RNAP catalytic core consists of 2 alpha, 1 beta, 1 beta' and 1 omega subunit. When a sigma factor is associated with the core the holoenzyme is formed, which can initiate transcription.

The enzyme catalyses RNA(n) + a ribonucleoside 5'-triphosphate = RNA(n+1) + diphosphate. In terms of biological role, DNA-dependent RNA polymerase catalyzes the transcription of DNA into RNA using the four ribonucleoside triphosphates as substrates. The chain is DNA-directed RNA polymerase subunit beta from Bradyrhizobium sp. (strain BTAi1 / ATCC BAA-1182).